The sequence spans 71 residues: Small ribosomal subunit protein bS18 (71 aa).

This sequence belongs to the bacterial ribosomal protein bS18 family. As to quaternary structure, part of the 30S ribosomal subunit. Forms a tight heterodimer with protein bS6.

Binds as a heterodimer with protein bS6 to the central domain of the 16S rRNA, where it helps stabilize the platform of the 30S subunit. The sequence is that of Small ribosomal subunit protein bS18 from Nostoc punctiforme (strain ATCC 29133 / PCC 73102).